A 309-amino-acid polypeptide reads, in one-letter code: L-2-keto-3-deoxyarabonate dehydratase (309 aa).

Lys-171 serves as the catalytic Schiff-base intermediate with substrate.

It belongs to the DapA family. Homodimer.

It catalyses the reaction 2-dehydro-3-deoxy-L-arabinonate = 2,5-dioxopentanoate + H2O. Catalyzes the dehydration of L-2-keto-3-deoxyarabonate (L-KDA) to alpha-ketoglutaric semialdehyde (alphaKGSA). Is involved in a degradation pathway of L-arabinose that allows A.brasilense to grow on L-arabinose as a sole carbon source. In Azospirillum brasilense, this protein is L-2-keto-3-deoxyarabonate dehydratase (araD).